We begin with the raw amino-acid sequence, 932 residues long: Isoleucine--tRNA ligase (932 aa).

The short motif at 58 to 68 is the 'HIGH' region element; sequence PYANGDIHIGH. Glu559 lines the L-isoleucyl-5'-AMP pocket. The 'KMSKS' region signature appears at 600–604; the sequence is KMSKS. Lys603 is a binding site for ATP. 4 residues coordinate Zn(2+): Cys895, Cys898, Cys915, and Cys918.

The protein belongs to the class-I aminoacyl-tRNA synthetase family. IleS type 1 subfamily. Monomer. Zn(2+) is required as a cofactor.

It is found in the cytoplasm. It carries out the reaction tRNA(Ile) + L-isoleucine + ATP = L-isoleucyl-tRNA(Ile) + AMP + diphosphate. Its function is as follows. Catalyzes the attachment of isoleucine to tRNA(Ile). As IleRS can inadvertently accommodate and process structurally similar amino acids such as valine, to avoid such errors it has two additional distinct tRNA(Ile)-dependent editing activities. One activity is designated as 'pretransfer' editing and involves the hydrolysis of activated Val-AMP. The other activity is designated 'posttransfer' editing and involves deacylation of mischarged Val-tRNA(Ile). In Saccharophagus degradans (strain 2-40 / ATCC 43961 / DSM 17024), this protein is Isoleucine--tRNA ligase.